The following is an 85-amino-acid chain: Large ribosomal subunit protein bL31B (85 aa).

The protein belongs to the bacterial ribosomal protein bL31 family. Type B subfamily. Part of the 50S ribosomal subunit.

The polypeptide is Large ribosomal subunit protein bL31B (Pseudomonas entomophila (strain L48)).